Consider the following 1306-residue polypeptide: Contactin-associated protein-like 5 (1306 aa).

The first 24 residues, methionine 1–threonine 24, serve as a signal peptide directing secretion. At alanine 25 to serine 1237 the chain is on the extracellular side. In terms of domain architecture, F5/8 type C spans cysteine 30 to cysteine 174. An intrachain disulfide couples cysteine 30 to cysteine 174. 2 Laminin G-like domains span residues valine 180–cysteine 360 and proline 367–cysteine 544. 3 N-linked (GlcNAc...) asparagine glycosylation sites follow: asparagine 282, asparagine 355, and asparagine 496. Cysteine 329 and cysteine 360 are joined by a disulfide. 3 disulfide bridges follow: cysteine 512/cysteine 544, cysteine 550/cysteine 561, and cysteine 555/cysteine 570. The EGF-like 1 domain maps to isoleucine 546–histidine 583. Asparagine 571 carries N-linked (GlcNAc...) asparagine glycosylation. Cysteine 572 and cysteine 582 are disulfide-bonded. The Fibrinogen C-terminal domain occupies asparagine 584–tryptophan 790. Asparagine 622 is a glycosylation site (N-linked (GlcNAc...) asparagine). Positions asparagine 791–cysteine 956 constitute a Laminin G-like 3 domain. Disulfide bonds link cysteine 929-cysteine 956, cysteine 960-cysteine 973, cysteine 967-cysteine 982, cysteine 984-cysteine 994, and cysteine 1164-cysteine 1199. Positions proline 957–lysine 995 constitute an EGF-like 2 domain. The region spanning glutamine 1013–cysteine 1199 is the Laminin G-like 4 domain. Residues alanine 1238 to methionine 1258 traverse the membrane as a helical segment. Over threonine 1259–isoleucine 1306 the chain is Cytoplasmic.

The protein belongs to the neurexin family.

It is found in the membrane. Its function is as follows. May play a role in the correct development and proper functioning of the peripheral and central nervous system and be involved in cell adhesion and intercellular communication. The polypeptide is Contactin-associated protein-like 5 (CNTNAP5) (Homo sapiens (Human)).